Consider the following 249-residue polypeptide: INO80 complex subunit 1 (249 aa).

2 C2H2-type zinc fingers span residues 73-100 (YTCE…LRSH) and 106-131 (FICS…RTVH).

Component of the INO80 chromatin remodeling complex.

The protein localises to the nucleus. It is found in the cytoplasm. Component of the INO80 complex which remodels chromatin by shifting nucleosomes and is involved in DNA repair. This Schizosaccharomyces pombe (strain 972 / ATCC 24843) (Fission yeast) protein is INO80 complex subunit 1 (iec1).